We begin with the raw amino-acid sequence, 326 residues long: Light-induced protein, chloroplastic (326 aa).

A chloroplast-targeting transit peptide spans 1-63 (MASISSLNQI…TNPKPKFTAQ (63 aa)).

This sequence belongs to the LIPC family. As to quaternary structure, associates with the major light-harvesting antenna complex polypeptides of the PSII oxygen-evolving complex. As to expression, expressed at high levels in leaves and in the petals and anthers of flowers.

It is found in the plastid. Its subcellular location is the chloroplast thylakoid membrane. In terms of biological role, required for normal plant growth. May be both photoprotective and play an ancillary role in photosynthesis. May structurally stabilize thylakoids during osmotic and oxidative stress. In Solanum demissum (Wild potato), this protein is Light-induced protein, chloroplastic.